Here is a 358-residue protein sequence, read N- to C-terminus: 4-diphosphocytidyl-2-C-methyl-D-erythritol kinase (358 aa).

Residue Lys24 is part of the active site. Residue Pro138 to Ala148 coordinates ATP. Asp186 is an active-site residue.

The protein belongs to the GHMP kinase family. IspE subfamily.

The enzyme catalyses 4-CDP-2-C-methyl-D-erythritol + ATP = 4-CDP-2-C-methyl-D-erythritol 2-phosphate + ADP + H(+). It functions in the pathway isoprenoid biosynthesis; isopentenyl diphosphate biosynthesis via DXP pathway; isopentenyl diphosphate from 1-deoxy-D-xylulose 5-phosphate: step 3/6. Functionally, catalyzes the phosphorylation of the position 2 hydroxy group of 4-diphosphocytidyl-2C-methyl-D-erythritol. The polypeptide is 4-diphosphocytidyl-2-C-methyl-D-erythritol kinase (Corynebacterium jeikeium (strain K411)).